Consider the following 508-residue polypeptide: Photosystem II CP47 reaction center protein (508 aa).

6 helical membrane-spanning segments follow: residues 21-36, 101-115, 140-156, 203-218, 237-252, and 457-472; these read SVHI…WAGS, IVFS…IWHW, GIHL…FGAF, IAAG…FHLS, VLSS…AFVV, and SFAL…HGAR.

This sequence belongs to the PsbB/PsbC family. PsbB subfamily. PSII is composed of 1 copy each of membrane proteins PsbA, PsbB, PsbC, PsbD, PsbE, PsbF, PsbH, PsbI, PsbJ, PsbK, PsbL, PsbM, PsbT, PsbX, PsbY, PsbZ, Psb30/Ycf12, at least 3 peripheral proteins of the oxygen-evolving complex and a large number of cofactors. It forms dimeric complexes. Binds multiple chlorophylls. PSII binds additional chlorophylls, carotenoids and specific lipids. serves as cofactor.

The protein localises to the plastid. Its subcellular location is the chloroplast thylakoid membrane. One of the components of the core complex of photosystem II (PSII). It binds chlorophyll and helps catalyze the primary light-induced photochemical processes of PSII. PSII is a light-driven water:plastoquinone oxidoreductase, using light energy to abstract electrons from H(2)O, generating O(2) and a proton gradient subsequently used for ATP formation. In Lactuca sativa (Garden lettuce), this protein is Photosystem II CP47 reaction center protein.